Here is a 399-residue protein sequence, read N- to C-terminus: MDAARASLLLAGGLAVSTSTSAVATAAQTVSIPHLSPHTRRRRQRRFLRLASAAASSPPPLPAASAQPHCSRWVVVMERPPAPAGGGEVSRAEAVDHYVATLARVLGSQEEAQMRIYDASWDGSYEFSCEIDDEASRDLAKMPGVLAVKPDTDKVDMSEKDNHGSGLSAANLGNFSDAVSNHSSSSGENEFWLVRMEKPGVEVVTKAQMVDHYTQTLMKVLGNEKDAQVSIYHISWERDYGFCCHIDEECAKELADVSGVLSVQPDTNFGSDNKNYKGDDSFKSSEATQAEVKTKRLFVTGLSFYTSEKTLRAAFEPFGELVEVKIIMDKISKRSKGYAFIEYTTEEAGGAALKAMNGQIINGWMIVVDVAKHRSRDRQPPYSASGRSNQVLRSRYHTG.

The N-terminal 52 residues, 1-52 (MDAARASLLLAGGLAVSTSTSAVATAAQTVSIPHLSPHTRRRRQRRFLRLAS), are a transit peptide targeting the chloroplast. Residues 295–373 (KRLFVTGLSF…WMIVVDVAKH (79 aa)) enclose the RRM domain. The disordered stretch occupies residues 377–399 (DRQPPYSASGRSNQVLRSRYHTG).

Its subcellular location is the plastid. It is found in the chloroplast. Functionally, involved in C-to-U editing of chloroplastic RNA. Functions as major chloroplastic editing factor. Controls a majority of the chloroplastic editing sites. The polypeptide is Organelle RRM domain-containing protein 1, chloroplastic (Oryza sativa subsp. japonica (Rice)).